The following is a 582-amino-acid chain: UPF0329 protein ECU07_0070 (582 aa).

The interval 326-386 is disordered; it reads EEKAKSKKKG…KTGKKSKGDQ (61 aa). Basic residues predominate over residues 330-339; it reads KSKKKGKKKS. The span at 344–354 shows a compositional bias: basic and acidic residues; that stretch reads EAKEEEKKESG.

It belongs to the UPF0329 family.

In Encephalitozoon cuniculi (strain GB-M1) (Microsporidian parasite), this protein is UPF0329 protein ECU07_0070.